An 839-amino-acid chain; its full sequence is Taste receptor type 1 member 2 (839 aa).

An N-terminal signal peptide occupies residues 1 to 19; that stretch reads MRPRATTICSLFFLLRVLA. At 20–566 the chain is on the extracellular side; sequence EPAKNSDFYL…AFLEWHEAPT (547 aa). Asn84, Asn127, Asn248, Asn292, Asn312, Asn368, Asn428, Asn487, and Asn527 each carry an N-linked (GlcNAc...) asparagine glycan. A helical transmembrane segment spans residues 567 to 587; the sequence is IVVALLAALGFLSTLAILVIF. The Cytoplasmic segment spans residues 588–602; that stretch reads WRHFQTPMVRSAGGP. A helical transmembrane segment spans residues 603–623; sequence MCFLMLTLLLVAYMVVPVYVG. Over 624-635 the chain is Extracellular; sequence PPKVSTCFCRQA. Residues 636–656 traverse the membrane as a helical segment; sequence LFPLCFTICISCIAVRSFQIV. Over 657 to 681 the chain is Cytoplasmic; sequence CVFKMASRFPRAYSYWVRYQGPYVS. The chain crosses the membrane as a helical span at residues 682-702; that stretch reads MAFITVLKMVTVVIGMLATGL. Residues 703–727 lie on the Extracellular side of the membrane; that stretch reads NPTTRIDPDDPKIMIVSCNPNYRNS. A helical transmembrane segment spans residues 728-748; it reads LFFNTGLDLLLSVVGFSFAYM. Residues 749-760 are Cytoplasmic-facing; it reads GKELPTNYNEAK. The helical transmembrane segment at 761–781 threads the bilayer; the sequence is FITLSMTFYFTSSVSLCTFMS. The Extracellular portion of the chain corresponds to 782–784; the sequence is AYN. The chain crosses the membrane as a helical span at residues 785–805; the sequence is GVLVTIMDLLVTVLNLLAISL. The Cytoplasmic segment spans residues 806–839; that stretch reads GYFGPKCYMILFYPERNTPAYFNSMIQGYTMRRD.

It belongs to the G-protein coupled receptor 3 family. TAS1R subfamily. As to quaternary structure, forms heterodimers with TAS1R3.

The protein localises to the cell membrane. Functionally, putative taste receptor. TAS1R2/TAS1R3 recognizes diverse natural and synthetic sweeteners. This chain is Taste receptor type 1 member 2 (TAS1R2), found in Papio hamadryas (Hamadryas baboon).